Consider the following 60-residue polypeptide: Protein YmjC (60 aa).

Positions 40–60 (HKPYPTNKMQTTSGKKVIQDR) are disordered.

This Escherichia coli (strain K12) protein is Protein YmjC (ymjC).